The following is a 459-amino-acid chain: UDP-N-acetylmuramoylalanine--D-glutamate ligase (459 aa).

119–125 (GTNGKTT) serves as a coordination point for ATP.

It belongs to the MurCDEF family.

It localises to the cytoplasm. It catalyses the reaction UDP-N-acetyl-alpha-D-muramoyl-L-alanine + D-glutamate + ATP = UDP-N-acetyl-alpha-D-muramoyl-L-alanyl-D-glutamate + ADP + phosphate + H(+). It functions in the pathway cell wall biogenesis; peptidoglycan biosynthesis. Cell wall formation. Catalyzes the addition of glutamate to the nucleotide precursor UDP-N-acetylmuramoyl-L-alanine (UMA). In Lacticaseibacillus casei (strain BL23) (Lactobacillus casei), this protein is UDP-N-acetylmuramoylalanine--D-glutamate ligase.